The sequence spans 522 residues: Putative aminopeptidase W07G4.4 (522 aa).

Positions 271 and 276 each coordinate Zn(2+). Residue K283 is part of the active site. Residues D294, D354, and E356 each contribute to the Zn(2+) site. R358 is a catalytic residue.

This sequence belongs to the peptidase M17 family. Requires Zn(2+) as cofactor.

This is Putative aminopeptidase W07G4.4 (lap-2) from Caenorhabditis elegans.